A 609-amino-acid chain; its full sequence is Arginine--tRNA ligase (609 aa).

The 'HIGH' region signature appears at 114-124 (VNPNKELHVGH).

This sequence belongs to the class-I aminoacyl-tRNA synthetase family. As to quaternary structure, monomer.

It localises to the cytoplasm. It catalyses the reaction tRNA(Arg) + L-arginine + ATP = L-arginyl-tRNA(Arg) + AMP + diphosphate. This chain is Arginine--tRNA ligase, found in Deinococcus radiodurans (strain ATCC 13939 / DSM 20539 / JCM 16871 / CCUG 27074 / LMG 4051 / NBRC 15346 / NCIMB 9279 / VKM B-1422 / R1).